We begin with the raw amino-acid sequence, 457 residues long: Serine--tRNA ligase (457 aa).

252-254 (TAE) is a binding site for L-serine. ATP is bound by residues 283 to 285 (RKE) and Val-299. Glu-306 is a binding site for L-serine. 370-373 (EVVS) serves as a coordination point for ATP. Thr-406 lines the L-serine pocket.

The protein belongs to the class-II aminoacyl-tRNA synthetase family. Type-1 seryl-tRNA synthetase subfamily. In terms of assembly, homodimer. The tRNA molecule binds across the dimer.

Its subcellular location is the cytoplasm. The catalysed reaction is tRNA(Ser) + L-serine + ATP = L-seryl-tRNA(Ser) + AMP + diphosphate + H(+). It carries out the reaction tRNA(Sec) + L-serine + ATP = L-seryl-tRNA(Sec) + AMP + diphosphate + H(+). The protein operates within aminoacyl-tRNA biosynthesis; selenocysteinyl-tRNA(Sec) biosynthesis; L-seryl-tRNA(Sec) from L-serine and tRNA(Sec): step 1/1. Catalyzes the attachment of serine to tRNA(Ser). Is also able to aminoacylate tRNA(Sec) with serine, to form the misacylated tRNA L-seryl-tRNA(Sec), which will be further converted into selenocysteinyl-tRNA(Sec). This is Serine--tRNA ligase from Thermococcus onnurineus (strain NA1).